A 293-amino-acid polypeptide reads, in one-letter code: 4-diphosphocytidyl-2-C-methyl-D-erythritol kinase (293 aa).

Residue K23 is part of the active site. 109–119 (PVAAGIGGGSA) contributes to the ATP binding site. The active site involves D151.

Belongs to the GHMP kinase family. IspE subfamily.

The enzyme catalyses 4-CDP-2-C-methyl-D-erythritol + ATP = 4-CDP-2-C-methyl-D-erythritol 2-phosphate + ADP + H(+). The protein operates within isoprenoid biosynthesis; isopentenyl diphosphate biosynthesis via DXP pathway; isopentenyl diphosphate from 1-deoxy-D-xylulose 5-phosphate: step 3/6. In terms of biological role, catalyzes the phosphorylation of the position 2 hydroxy group of 4-diphosphocytidyl-2C-methyl-D-erythritol. The chain is 4-diphosphocytidyl-2-C-methyl-D-erythritol kinase from Rhizorhabdus wittichii (strain DSM 6014 / CCUG 31198 / JCM 15750 / NBRC 105917 / EY 4224 / RW1) (Sphingomonas wittichii).